We begin with the raw amino-acid sequence, 714 residues long: G protein-coupled receptor kinase 2 (714 aa).

The interval 1 to 308 is N-terminal; sequence MELENIVANT…LEAQPITYKT (308 aa). RGS domains lie at 53–174 and 177–294; these read YGYV…SQHS and INHK…HRYL. Positions 141–229 are disordered; sequence SNANPTETAE…GGGEGGGGGK (89 aa). The span at 154-175 shows a compositional bias: low complexity; the sequence is CNNTTANNCNNINNSNNSQHSS. Composition is skewed to basic and acidic residues over residues 176-190 and 199-220; these read DINH…HNGD and HQDD…EKGG. The 266-residue stretch at 309 to 574 folds into the Protein kinase domain; sequence FRMYRVLGKG…GQDVMAHPFF (266 aa). Residues 315-323 and K338 contribute to the ATP site; that span reads LGKGGFGEV. The Proton acceptor role is filled by D435. In terms of domain architecture, AGC-kinase C-terminal spans 577–642; sequence TQLNWRRLEA…GSVSISWQNE (66 aa). The residue at position 612 (S612) is a Phosphoserine. The residue at position 613 (T613) is a Phosphothreonine. A disordered region spans residues 667–714; that stretch reads INAAPEPDKAGCFPFRRKKKQPARTQPIPIPEHLLTTSHSVSSTTVES. Residues 698 to 714 show a composition bias toward low complexity; that stretch reads EHLLTTSHSVSSTTVES.

The protein belongs to the protein kinase superfamily. AGC Ser/Thr protein kinase family. GPRK subfamily. In terms of tissue distribution, expressed in all larval tissues and in adult ovaries. Larval CNS staining is localized to axons projecting to the optic lobes and the mushroom bodies, in the longitudinal connectives, and in cell bodies and nerves of the ring gland corpus allatum. Adult CNS staining is detectable only in cell bodies and processes associated with the ellipsoid body of the central complex and portions of the mushroom bodies. In the wing disk, expression is confined to a stripe that parallels the anterior/posterior boundary of the wing blade and the hinge region, and weak expression in the prospective notum.

The protein localises to the membrane. The enzyme catalyses [G-protein-coupled receptor] + ATP = [G-protein-coupled receptor]-phosphate + ADP + H(+). Specifically phosphorylates the activated forms of G protein-coupled receptors. Required during oogenesis and embryogenesis; component of a signaling pathway that functions during egg chamber maturation. This Drosophila melanogaster (Fruit fly) protein is G protein-coupled receptor kinase 2 (Gprk2).